Consider the following 509-residue polypeptide: uncharacterized protein (509 aa).

The N-terminal stretch at 1–32 (MMLPKRNIIHFLRKRAIFIVAAFIALLTVDYS) is a signal peptide.

Its subcellular location is the endoplasmic reticulum. This is an uncharacterized protein from Schizosaccharomyces pombe (strain 972 / ATCC 24843) (Fission yeast).